The chain runs to 255 residues: Biotin carboxyl carrier protein of acetyl-CoA carboxylase 2, chloroplastic (255 aa).

Residues 1 to 87 (MASLSVPCVK…TNVPEPAELS (87 aa)) constitute a chloroplast transit peptide. Residues 148-193 (PPAQPVALPPSPTPTSTPATAKPTSAPSSSHPPLKSPMAGTFYRSP) are disordered. Over residues 149–162 (PAQPVALPPSPTPT) the composition is skewed to pro residues. Residues 163–180 (STPATAKPTSAPSSSHPP) are compositionally biased toward low complexity. The region spanning 178–254 (HPPLKSPMAG…SVDTPLFVIA (77 aa)) is the Biotinyl-binding domain. N6-biotinyllysine is present on Lys-220.

Acetyl-CoA carboxylase is a heterohexamer composed of biotin carboxyl carrier protein, biotin carboxylase and 2 subunits each of ACCase subunit alpha and ACCase plastid-coded subunit beta (accD). In terms of tissue distribution, primarily expressed in 7 to 10 days after flowering seeds at levels approximately 2-fold less abundant than BCCP1.

It localises to the plastid. The protein localises to the chloroplast. It functions in the pathway lipid metabolism; fatty acid biosynthesis. Its function is as follows. This protein is a component of the acetyl coenzyme A carboxylase complex; first, biotin carboxylase catalyzes the carboxylation of the carrier protein and then the transcarboxylase transfers the carboxyl group to form malonyl-CoA. In Arabidopsis thaliana (Mouse-ear cress), this protein is Biotin carboxyl carrier protein of acetyl-CoA carboxylase 2, chloroplastic (BCCP2).